The following is a 366-amino-acid chain: Beta sliding clamp (366 aa).

The protein belongs to the beta sliding clamp family. Forms a ring-shaped head-to-tail homodimer around DNA which binds and tethers DNA polymerases and other proteins to the DNA. The DNA replisome complex has a single clamp-loading complex (3 tau and 1 each of delta, delta', psi and chi subunits) which binds 3 Pol III cores (1 core on the leading strand and 2 on the lagging strand) each with a beta sliding clamp dimer. Additional proteins in the replisome are other copies of gamma, psi and chi, Ssb, DNA helicase and RNA primase.

The protein localises to the cytoplasm. In terms of biological role, confers DNA tethering and processivity to DNA polymerases and other proteins. Acts as a clamp, forming a ring around DNA (a reaction catalyzed by the clamp-loading complex) which diffuses in an ATP-independent manner freely and bidirectionally along dsDNA. Initially characterized for its ability to contact the catalytic subunit of DNA polymerase III (Pol III), a complex, multichain enzyme responsible for most of the replicative synthesis in bacteria; Pol III exhibits 3'-5' exonuclease proofreading activity. The beta chain is required for initiation of replication as well as for processivity of DNA replication. The polypeptide is Beta sliding clamp (dnaN) (Chlamydia pneumoniae (Chlamydophila pneumoniae)).